Consider the following 338-residue polypeptide: Fructose-1,6-bisphosphatase class 1 1 (338 aa).

4 residues coordinate Mg(2+): Glu-88, Asp-107, Leu-109, and Asp-110. Substrate is bound by residues 110-113 (DGSS) and Asn-196. Glu-268 serves as a coordination point for Mg(2+).

Belongs to the FBPase class 1 family. As to quaternary structure, homotetramer. It depends on Mg(2+) as a cofactor.

It is found in the cytoplasm. The catalysed reaction is beta-D-fructose 1,6-bisphosphate + H2O = beta-D-fructose 6-phosphate + phosphate. It functions in the pathway carbohydrate biosynthesis; Calvin cycle. In Bradyrhizobium sp. (strain BTAi1 / ATCC BAA-1182), this protein is Fructose-1,6-bisphosphatase class 1 1.